A 183-amino-acid chain; its full sequence is Adenine phosphoribosyltransferase (183 aa).

This sequence belongs to the purine/pyrimidine phosphoribosyltransferase family. In terms of assembly, homodimer.

Its subcellular location is the cytoplasm. It catalyses the reaction AMP + diphosphate = 5-phospho-alpha-D-ribose 1-diphosphate + adenine. It functions in the pathway purine metabolism; AMP biosynthesis via salvage pathway; AMP from adenine: step 1/1. Functionally, catalyzes a salvage reaction resulting in the formation of AMP, that is energically less costly than de novo synthesis. The chain is Adenine phosphoribosyltransferase from Escherichia coli (strain K12 / MC4100 / BW2952).